Here is a 557-residue protein sequence, read N- to C-terminus: MADSSPDSCFKGGKFSAPGFRFHPTDEELVMYYLKRKICRKRLRVNVIGVVDVYKMDPEELPGQSMLKTGDRQWFYFTPRSRKYPNAARSNRGTENGYWKATGKDRVIEYNSRSVGLKKTLVFYRGRAPSGERTDWVMHEYTMDEDELGRCKNPQEYYALYKLFKKSGAGPKNGEQYGAPFQEEEWVDDDNEDVNAIAVAVPEQPVVRYEDARRVDERRLFNPVILQLEDIDELLNGIPNAPGVPQRCIPQVNSEEELQSTLVNNSAREFLPNGQQYNRPSSFDSLETAEVTSAPLVFEKEDFIEMDDLLLIPEFGASSTEKAAQFSNHGEFDDFNEFDQLFHDVSMSLDMEPIDQGTSANLSSLSDSANYTSDQKQQLLYQQFQDQTPENQLNNIMDPSTTLNQITSDIWFEDDQAILFDQQQSFSGAFASPSSGVMPDSTNPTMSVNAQGHEIQNGGGTTSQFSSALWALMDSIPSTPASACEGPLNRTFVRMSSFSRMRFNGKANGTPVSTTIAKKGIRNRGFLLLSIVGALCAIFWVLVATVRVSGRSLLLKD.

The NAC domain maps to 16–166; it reads SAPGFRFHPT…YYALYKLFKK (151 aa). Residues 115-172 mediate DNA binding; that stretch reads VGLKKTLVFYRGRAPSGERTDWVMHEYTMDEDELGRCKNPQEYYALYKLFKKSGAGPK. Residues 526-546 form a helical membrane-spanning segment; the sequence is FLLLSIVGALCAIFWVLVATV.

In terms of tissue distribution, expressed in roots, rosette leaves, cauline leaves, shoot apex, stems and flowers.

The protein resides in the endoplasmic reticulum membrane. Its subcellular location is the nucleus. In terms of biological role, transcriptional activator activated by proteolytic cleavage through regulated intramembrane proteolysis (RIP). Transcriptional activator that acts as a positive regulator of AOX1A during mitochondrial dysfunction. Binds directly to AOX1A promoter. Mediates mitochondrial retrograde signaling. In Arabidopsis thaliana (Mouse-ear cress), this protein is NAC domain-containing protein 17.